The primary structure comprises 265 residues: Proline-rich protein 23B (265 aa).

A compositionally biased stretch (low complexity) spans 1 to 18 (MVSRPRSPSAFPAPWWGQ). Disordered regions lie at residues 1–49 (MVSR…EDPA) and 226–265 (PSSPLQPLPPSPCVGSPGPHARSPLPERPPCKARRRLFQA). The segment covering 226 to 237 (PSSPLQPLPPSP) has biased composition (pro residues). The segment covering 256–265 (CKARRRLFQA) has biased composition (basic residues).

This sequence belongs to the PRR23 family.

This is Proline-rich protein 23B (PRR23B) from Homo sapiens (Human).